We begin with the raw amino-acid sequence, 1001 residues long: Translation initiation factor IF-2 (1001 aa).

The disordered stretch occupies residues lysine 34–glutamate 404. The segment covering serine 67–glutamine 80 has biased composition (basic and acidic residues). Composition is skewed to pro residues over residues proline 98 to proline 107, proline 147 to proline 157, and proline 163 to proline 172. Residues alanine 173–alanine 190 show a composition bias toward low complexity. Basic and acidic residues-rich tracts occupy residues serine 212–valine 230 and proline 238–proline 252. Acidic residues predominate over residues aspartate 332 to glycine 342. Composition is skewed to low complexity over residues lysine 362 to proline 371 and alanine 385 to arginine 394. Positions serine 395–glutamate 404 are enriched in basic and acidic residues. Positions arginine 493–valine 666 constitute a tr-type G domain. The interval glycine 502–threonine 509 is G1. Residue glycine 502–threonine 509 participates in GTP binding. Residues glycine 527 to histidine 531 form a G2 region. The G3 stretch occupies residues aspartate 552–glycine 555. GTP-binding positions include aspartate 552–histidine 556 and asparagine 606–aspartate 609. Residues asparagine 606–aspartate 609 are G4. Residues serine 642–leucine 644 form a G5 region.

This sequence belongs to the TRAFAC class translation factor GTPase superfamily. Classic translation factor GTPase family. IF-2 subfamily.

The protein localises to the cytoplasm. One of the essential components for the initiation of protein synthesis. Protects formylmethionyl-tRNA from spontaneous hydrolysis and promotes its binding to the 30S ribosomal subunits. Also involved in the hydrolysis of GTP during the formation of the 70S ribosomal complex. This is Translation initiation factor IF-2 (infB) from Synechocystis sp. (strain ATCC 27184 / PCC 6803 / Kazusa).